The following is a 101-amino-acid chain: MAKKSKIAKNEQRKEVVAHHAARRAELKRTAVAVTAGEEERAAARLALQRLPRDASPTRVRNRDAADGRPRGTLRKFGLSRIRVREMAHAGELPGVTKSSW.

Disordered regions lie at residues 1–21 (MAKK…AHHA) and 49–73 (QRLP…PRGT). 2 stretches are compositionally biased toward basic and acidic residues: residues 8-21 (AKNE…AHHA) and 61-70 (RNRDAADGRP).

This sequence belongs to the universal ribosomal protein uS14 family. Part of the 30S ribosomal subunit. Contacts proteins S3 and S10.

In terms of biological role, binds 16S rRNA, required for the assembly of 30S particles and may also be responsible for determining the conformation of the 16S rRNA at the A site. The protein is Small ribosomal subunit protein uS14A of Kineococcus radiotolerans (strain ATCC BAA-149 / DSM 14245 / SRS30216).